The primary structure comprises 213 residues: Protein Tpen_0748 (213 aa).

One can recognise an AMMECR1 domain in the interval 7–207 (EEGALLVRLA…ETTPKGDVVE (201 aa)).

In Thermofilum pendens (strain DSM 2475 / Hrk 5), this protein is Protein Tpen_0748.